Here is a 189-residue protein sequence, read N- to C-terminus: MLLSDRDIRAEISVGRLGIDPFDDSMVQPSSVDVRLDGLFRVFNNTRYTHIDPALRQDELTSLVEPAEGEPFVLHPGEFVLGSTLEVCSLPNDLAGRLEGKSSLGRLGLLTHSTAGFIDPGFSGHITLELSNVANLPITLWPGMKIGQLCLLKLSSAAEFPYGSSEAGSKYQGQRGPTPSKAYLNFNRS.

DCTP is bound by residues 101 to 106 (KSSLGR), Asp-119, 127 to 129 (TLE), Gln-148, Tyr-162, and Gln-174. The Proton donor/acceptor role is filled by Glu-129. The tract at residues 163 to 189 (GSSEAGSKYQGQRGPTPSKAYLNFNRS) is disordered.

It belongs to the dCTP deaminase family. Homotrimer.

The catalysed reaction is dCTP + 2 H2O = dUMP + NH4(+) + diphosphate. Its pathway is pyrimidine metabolism; dUMP biosynthesis; dUMP from dCTP: step 1/1. Functionally, bifunctional enzyme that catalyzes both the deamination of dCTP to dUTP and the hydrolysis of dUTP to dUMP without releasing the toxic dUTP intermediate. This chain is dCTP deaminase, dUMP-forming, found in Rhodococcus erythropolis (strain PR4 / NBRC 100887).